Consider the following 284-residue polypeptide: Large ribosomal subunit protein uL2 (284 aa).

The interval 232-284 (RGTAMNPVDHPHGGGEGRHNGYIPRTPWGKVTKGLKTRDKRKSNKWIVKDRRK) is disordered. Residues 240–250 (DHPHGGGEGRH) are compositionally biased toward basic and acidic residues. The span at 264 to 284 (KGLKTRDKRKSNKWIVKDRRK) shows a compositional bias: basic residues.

The protein belongs to the universal ribosomal protein uL2 family. As to quaternary structure, part of the 50S ribosomal subunit. Forms a bridge to the 30S subunit in the 70S ribosome.

In terms of biological role, one of the primary rRNA binding proteins. Required for association of the 30S and 50S subunits to form the 70S ribosome, for tRNA binding and peptide bond formation. It has been suggested to have peptidyltransferase activity; this is somewhat controversial. Makes several contacts with the 16S rRNA in the 70S ribosome. In Chlamydia abortus (strain DSM 27085 / S26/3) (Chlamydophila abortus), this protein is Large ribosomal subunit protein uL2.